The chain runs to 326 residues: Neuferricin homolog (326 aa).

An N-terminal signal peptide occupies residues 1 to 34 (MDKNRRRTDDAGLMTKTLAGIAALVFFLSFICSS). The 100-residue stretch at 98-197 (KHVFTPEQLH…KEYPLVGVVA (100 aa)) folds into the Cytochrome b5 heme-binding domain.

Belongs to the cytochrome b5 family. MAPR subfamily.

The protein localises to the secreted. Functionally, heme-binding protein. The chain is Neuferricin homolog (tag-131) from Caenorhabditis elegans.